The primary structure comprises 141 residues: Hemoglobin subunit alpha (141 aa).

Residues 1–141 (VLSPADKTNV…VSTVLTSKYR (141 aa)) enclose the Globin domain. Position 3 is a phosphoserine (Ser3). N6-succinyllysine is present on Lys7. Thr8 bears the Phosphothreonine mark. Lys11 is modified (N6-succinyllysine). The residue at position 16 (Lys16) is an N6-acetyllysine; alternate. Position 16 is an N6-succinyllysine; alternate (Lys16). Residue Ser35 is modified to Phosphoserine. Lys40 carries the N6-succinyllysine modification. Residue His58 coordinates O2. Heme b is bound at residue His87. Ser102 carries the post-translational modification Phosphoserine. A Phosphothreonine modification is found at Thr108. Ser124 and Ser131 each carry phosphoserine. Thr134 and Thr137 each carry phosphothreonine. Phosphoserine is present on Ser138.

This sequence belongs to the globin family. Heterotetramer of two alpha chains and two beta chains. As to expression, red blood cells.

Involved in oxygen transport from the lung to the various peripheral tissues. Functionally, hemopressin acts as an antagonist peptide of the cannabinoid receptor CNR1. Hemopressin-binding efficiently blocks cannabinoid receptor CNR1 and subsequent signaling. This is Hemoglobin subunit alpha (HBA) from Physeter macrocephalus (Sperm whale).